The chain runs to 510 residues: Maturase K (510 aa).

The protein belongs to the intron maturase 2 family. MatK subfamily.

The protein localises to the plastid. The protein resides in the chloroplast. Functionally, usually encoded in the trnK tRNA gene intron. Probably assists in splicing its own and other chloroplast group II introns. The protein is Maturase K of Penstemon heterophyllus (Foothill penstemon).